The sequence spans 544 residues: Chaperonin GroEL (544 aa).

ATP-binding positions include 29-32 (TIGP), 86-90 (DGTTT), glycine 413, 478-480 (NAA), and aspartate 494.

Belongs to the chaperonin (HSP60) family. As to quaternary structure, forms a cylinder of 14 subunits composed of two heptameric rings stacked back-to-back. Interacts with the co-chaperonin GroES.

The protein localises to the cytoplasm. The catalysed reaction is ATP + H2O + a folded polypeptide = ADP + phosphate + an unfolded polypeptide.. Functionally, together with its co-chaperonin GroES, plays an essential role in assisting protein folding. The GroEL-GroES system forms a nano-cage that allows encapsulation of the non-native substrate proteins and provides a physical environment optimized to promote and accelerate protein folding. The sequence is that of Chaperonin GroEL from Exiguobacterium sp. (strain ATCC BAA-1283 / AT1b).